The primary structure comprises 193 residues: dTTP/UTP pyrophosphatase (193 aa).

Aspartate 77 serves as the catalytic Proton acceptor.

This sequence belongs to the Maf family. YhdE subfamily. The cofactor is a divalent metal cation.

It localises to the cytoplasm. The enzyme catalyses dTTP + H2O = dTMP + diphosphate + H(+). The catalysed reaction is UTP + H2O = UMP + diphosphate + H(+). In terms of biological role, nucleoside triphosphate pyrophosphatase that hydrolyzes dTTP and UTP. May have a dual role in cell division arrest and in preventing the incorporation of modified nucleotides into cellular nucleic acids. The sequence is that of dTTP/UTP pyrophosphatase from Bacteroides fragilis (strain YCH46).